The chain runs to 285 residues: Putative quercetin 2,3-dioxygenase PA3240 (285 aa).

Residues H60, H62, H104, and E106 each coordinate a divalent metal cation.

The protein belongs to the pirin family. It depends on a divalent metal cation as a cofactor.

The catalysed reaction is quercetin + O2 = 2-(3,4-dihydroxybenzoyloxy)-4,6-dihydroxybenzoate + CO. It participates in flavonoid metabolism; quercetin degradation. In terms of biological role, putative quercetin 2,3-dioxygenase. The polypeptide is Putative quercetin 2,3-dioxygenase PA3240 (Pseudomonas aeruginosa (strain ATCC 15692 / DSM 22644 / CIP 104116 / JCM 14847 / LMG 12228 / 1C / PRS 101 / PAO1)).